The chain runs to 152 residues: UPF0178 protein swp_1285 (152 aa).

It belongs to the UPF0178 family.

In Shewanella piezotolerans (strain WP3 / JCM 13877), this protein is UPF0178 protein swp_1285.